We begin with the raw amino-acid sequence, 208 residues long: Small ribosomal subunit protein uS4 (208 aa).

In terms of domain architecture, S4 RNA-binding spans 98–161 (RRLDNVVYRL…RKIPVLAEAQ (64 aa)).

This sequence belongs to the universal ribosomal protein uS4 family. As to quaternary structure, part of the 30S ribosomal subunit. Contacts protein S5. The interaction surface between S4 and S5 is involved in control of translational fidelity.

In terms of biological role, one of the primary rRNA binding proteins, it binds directly to 16S rRNA where it nucleates assembly of the body of the 30S subunit. Its function is as follows. With S5 and S12 plays an important role in translational accuracy. This chain is Small ribosomal subunit protein uS4, found in Desulfovibrio desulfuricans (strain ATCC 27774 / DSM 6949 / MB).